The sequence spans 1056 residues: Contactin-5 (1056 aa).

Residues 1 to 14 (MKADSSSSSSMSSR) show a composition bias toward low complexity. The segment at 1-33 (MKADSSSSSSMSSRMRLRNSHGVGSSSQDWSPF) is disordered. Polar residues predominate over residues 22–31 (GVGSSSQDWS). Ig-like C2-type domains are found at residues 57-142 (PVFI…IVLS), 154-240 (PFSG…RVLS), 258-343 (PKIE…GHLQ), 348-432 (PQWI…AELK), 438-519 (PMFN…AELT), and 527-622 (PMRV…AELL). 3 cysteine pairs are disulfide-bonded: cysteine 81–cysteine 131, cysteine 175–cysteine 227, and cysteine 280–cysteine 327. N-linked (GlcNAc...) asparagine glycosylation is found at asparagine 96 and asparagine 119. The N-linked (GlcNAc...) asparagine glycan is linked to asparagine 355. Intrachain disulfides connect cysteine 369-cysteine 416, cysteine 459-cysteine 507, and cysteine 549-cysteine 606. 2 N-linked (GlcNAc...) asparagine glycosylation sites follow: asparagine 489 and asparagine 496. 4 consecutive Fibronectin type-III domains span residues 629–727 (PPGV…TKEA), 732–829 (APAN…SAEG), 834–928 (PPSE…TKKN), and 933–1023 (PPGN…TSSG). Positions 711–736 (GTGDPSPPSRAVRTKEAVPSVAPANV) are disordered. 4 N-linked (GlcNAc...) asparagine glycosylation sites follow: asparagine 772, asparagine 887, asparagine 945, and asparagine 958. Asparagine 1035 carries GPI-anchor amidated asparagine lipidation. Residues 1036-1056 (SPPGLAWTALFLSLMVPSFPL) constitute a propeptide, removed in mature form.

This sequence belongs to the immunoglobulin superfamily. Contactin family.

The protein resides in the cell membrane. In terms of biological role, contactins mediate cell surface interactions during nervous system development. The sequence is that of Contactin-5 (cntn5) from Danio rerio (Zebrafish).